A 480-amino-acid polypeptide reads, in one-letter code: Thyroid receptor-interacting protein 6 (480 aa).

Residues 1 to 12 (MSGPTWLPPKQP) are compositionally biased toward pro residues. Residues 1–43 (MSGPTWLPPKQPEPSRLPQGRSLPRGALGPPTAHGATLQPHPR) form a disordered region. At Arg-25 the chain carries Asymmetric dimethylarginine; alternate. Arg-25 carries the post-translational modification Omega-N-methylarginine; alternate. At Tyr-55 the chain carries Phosphotyrosine; by SRC. Residues 57–84 (PPGVPEDRGPTWVGSHGTPQRLQGLPPD) form a disordered region. The residue at position 92 (Ser-92) is a Phosphoserine. Positions 107 to 134 (LDGGRSHAPRRPDRQAFEAPPPHAYRGG) are disordered. Residues 108–122 (DGGRSHAPRRPDRQA) show a composition bias toward basic and acidic residues. Residues Arg-111, Arg-183, and Arg-190 each carry the omega-N-methylarginine modification. Position 193 is a phosphoserine (Ser-193). Arg-209 and Arg-242 each carry omega-N-methylarginine. A disordered region spans residues 218–257 (RSHREPGPGVPEGPSGVHIPAGGGRGGGHEPQGPLGQPPE). Positions 238–247 (AGGGRGGGHE) are enriched in gly residues. 3 LIM zinc-binding domains span residues 281–339 (GRCG…YVAT), 341–401 (EKCS…KFAP), and 404–471 (SVCG…RIQE). Positions 473-480 (SATVTTDC) are interaction with MAGI1 and PTPN13.

This sequence belongs to the zyxin/ajuba family. Specifically interacts with the ligand binding domain of the thyroid receptor (TR) in the presence of thyroid hormone. Interacts (via the third LIM domain and C-terminus) with PTPN13 (via the second PDZ domain). Interacts (via the second LIM domain or via the third LIM domain plus C-terminus) with PDLIM4 (via PDZ domain). Found in a complex with PTPN13 and PDLIM4. Interacts with SVIL isoform 2. Interacts with LPAR2 but not other LPA receptors. Interacts with PRKAA2. Interacts with MAGI1. Interacts with SCRIB. In case of infection, interacts with S.typhimurium protein sseI. In terms of processing, phosphorylation at Tyr-55 by SRC is required for enhancement of lysophosphatidic acid-induced cell migration. Tyr-55 is dephosphorylated by PTPN13. Highly expressed in kidney, stomach, lung, heart and testis. Low expression levels in brain, colon, thymus, pancreas and skin. Not expressed in skeletal muscle.

Its subcellular location is the cytoplasm. It localises to the cytoskeleton. The protein resides in the cell junction. It is found in the focal adhesion. The protein localises to the nucleus. Its function is as follows. Relays signals from the cell surface to the nucleus to weaken adherens junction and promote actin cytoskeleton reorganization and cell invasiveness. Involved in lysophosphatidic acid-induced cell adhesion and migration. Acts as a transcriptional coactivator for NF-kappa-B and JUN, and mediates the transrepression of these transcription factors induced by glucocorticoid receptor. The polypeptide is Thyroid receptor-interacting protein 6 (Trip6) (Mus musculus (Mouse)).